Here is a 407-residue protein sequence, read N- to C-terminus: Multifunctional CCA protein (407 aa).

Residues G8 and R11 each contribute to the ATP site. CTP is bound by residues G8 and R11. Mg(2+) contacts are provided by D21 and D23. ATP contacts are provided by R91, R137, and R140. The CTP site is built by R91, R137, and R140. An HD domain is found at 228–329; that stretch reads TGIHTLLVAE…VKIFNKLDVW (102 aa).

Belongs to the tRNA nucleotidyltransferase/poly(A) polymerase family. Bacterial CCA-adding enzyme type 1 subfamily. Monomer. Can also form homodimers and oligomers. Mg(2+) is required as a cofactor. Requires Ni(2+) as cofactor.

The catalysed reaction is a tRNA precursor + 2 CTP + ATP = a tRNA with a 3' CCA end + 3 diphosphate. It catalyses the reaction a tRNA with a 3' CCA end + 2 CTP + ATP = a tRNA with a 3' CCACCA end + 3 diphosphate. In terms of biological role, catalyzes the addition and repair of the essential 3'-terminal CCA sequence in tRNAs without using a nucleic acid template. Adds these three nucleotides in the order of C, C, and A to the tRNA nucleotide-73, using CTP and ATP as substrates and producing inorganic pyrophosphate. tRNA 3'-terminal CCA addition is required both for tRNA processing and repair. Also involved in tRNA surveillance by mediating tandem CCA addition to generate a CCACCA at the 3' terminus of unstable tRNAs. While stable tRNAs receive only 3'-terminal CCA, unstable tRNAs are marked with CCACCA and rapidly degraded. The chain is Multifunctional CCA protein from Vibrio vulnificus (strain CMCP6).